A 181-amino-acid chain; its full sequence is ADP-ribosylation factor 1 (181 aa).

Gly2 carries the N-myristoyl glycine lipid modification. Residues 24-31 (GLDAAGKT), 67-71 (DVGGQ), and 126-129 (NKQD) contribute to the GTP site.

It belongs to the small GTPase superfamily. Arf family. As to quaternary structure, interacts with AGD7 and GDAP1. GDP-locked form interacts with cytosolic tail of p24 proteins. Interacts with AGD5 at trans-Golgi network. Interacts with A.tumefaciens AK6b.

Its subcellular location is the golgi apparatus. The protein resides in the endosome. It is found in the trans-Golgi network. The protein localises to the early endosome. The enzyme catalyses GTP + H2O = GDP + phosphate + H(+). With respect to regulation, activated by AGD7 and AGD10. GTP-binding protein involved in protein trafficking; required for the sequence-specific vacuolar sorting route to the lytic vacuole, for the ER-to-Golgi transport and for the Golgi-derived transport to the plasma membrane. Involved in the recruitment of COPI and GDAP1 to membranes. Required for recycling of PIN auxin transporters (e.g. PIN1 and PIN2) in a fungal toxin brefeldin A (BFA)-dependent manner. Involved in various auxin-dependent developmental processes. In Arabidopsis thaliana (Mouse-ear cress), this protein is ADP-ribosylation factor 1.